The primary structure comprises 393 residues: S-adenosylmethionine synthase (393 aa).

Glu-9 is a binding site for Mg(2+). His-15 provides a ligand contact to ATP. Glu-43 lines the K(+) pocket. Glu-56 and Gln-99 together coordinate L-methionine. ATP is bound by residues 167-169, 235-238, Asp-246, 252-253, Ala-269, Lys-273, and Lys-277; these read DGK, SGRF, and RK. Asp-246 serves as a coordination point for L-methionine. Position 277 (Lys-277) interacts with L-methionine.

The protein belongs to the AdoMet synthase family. In terms of assembly, homotetramer. The cofactor is Mn(2+). It depends on Mg(2+) as a cofactor. Co(2+) serves as cofactor. Requires K(+) as cofactor.

It is found in the cytoplasm. It catalyses the reaction L-methionine + ATP + H2O = S-adenosyl-L-methionine + phosphate + diphosphate. Its pathway is amino-acid biosynthesis; S-adenosyl-L-methionine biosynthesis; S-adenosyl-L-methionine from L-methionine: step 1/1. Its function is as follows. Catalyzes the formation of S-adenosylmethionine from methionine and ATP. The reaction comprises two steps that are both catalyzed by the same enzyme: formation of S-adenosylmethionine (AdoMet) and triphosphate, and subsequent hydrolysis of the triphosphate. The polypeptide is S-adenosylmethionine synthase (SAM) (Camellia sinensis (Tea plant)).